A 241-amino-acid polypeptide reads, in one-letter code: Large ribosomal subunit protein uL3 (241 aa).

The protein belongs to the universal ribosomal protein uL3 family. As to quaternary structure, part of the 50S ribosomal subunit. Forms a cluster with proteins L14 and L19.

Functionally, one of the primary rRNA binding proteins, it binds directly near the 3'-end of the 23S rRNA, where it nucleates assembly of the 50S subunit. The chain is Large ribosomal subunit protein uL3 from Aquifex aeolicus (strain VF5).